A 201-amino-acid polypeptide reads, in one-letter code: Dephospho-CoA kinase (201 aa).

The DPCK domain occupies 4–201 (AFFVTASIAC…VIQEISKGNM (198 aa)). 12 to 17 (ACGKST) contributes to the ATP binding site.

Belongs to the CoaE family.

Its subcellular location is the cytoplasm. It catalyses the reaction 3'-dephospho-CoA + ATP = ADP + CoA + H(+). Its pathway is cofactor biosynthesis; coenzyme A biosynthesis; CoA from (R)-pantothenate: step 5/5. Its function is as follows. Catalyzes the phosphorylation of the 3'-hydroxyl group of dephosphocoenzyme A to form coenzyme A. The protein is Dephospho-CoA kinase of Campylobacter jejuni subsp. jejuni serotype O:2 (strain ATCC 700819 / NCTC 11168).